We begin with the raw amino-acid sequence, 409 residues long: Ubiquitin-associated domain-containing protein 1 (409 aa).

The residue at position 1 (Met1) is an N-acetylmethionine. The Ubiquitin-like domain occupies 14-98 (LRLHICAADG…LLLIKKRVPS (85 aa)). The segment at 101 to 122 (PKMADVSAEEKKKQEQKAPDKD) is disordered. Over residues 108–122 (AEEKKKQEQKAPDKD) the composition is skewed to basic and acidic residues. The region spanning 187–231 (DEDERVDETALRQLTEMGFPESRASKALRLNHMSVPQAMEWLIEH) is the UBA 1 domain. A disordered region spans residues 239–273 (TPLPGHAAQAGASAAATTSSTSSEAAVGTSVEDEE). The segment covering 245 to 268 (AAQAGASAAATTSSTSSEAAVGTS) has biased composition (low complexity). In terms of domain architecture, UBA 2 spans 292-332 (RADARAVISLMEMGFDEKEVIDALRVNNNQQNAACEWLLGD). The STI1 domain maps to 357–396 (NPVVQLGLTNPKTLLAFEDMLENPLNSTQWMNDPETGPVM).

In terms of assembly, component of the KPC complex composed of RNF123/KPC1 and UBAC1/KPC2. Interacts (via ubiquitin-like domain) with RNF123. Interacts (via ubiquitin-like and UBA domains) with the proteasome via its N-terminal domain.

The protein resides in the cytoplasm. The protein operates within protein modification; protein ubiquitination. In terms of biological role, non-catalytic component of the KPC complex, a E3 ubiquitin-protein ligase complex that mediates polyubiquitination of target proteins, such as CDKN1B and NFKB1. The KPC complex catalyzes polyubiquitination and proteasome-mediated degradation of CDKN1B during G1 phase of the cell cycle. The KPC complex also acts as a key regulator of the NF-kappa-B signaling by promoting maturation of the NFKB1 component of NF-kappa-B by catalyzing ubiquitination of the NFKB1 p105 precursor. Within the KPC complex, UBAC1 acts as an adapter that promotes the transfer of target proteins that have been polyubiquitinated by RNF123/KPC1 to the 26S proteasome. The protein is Ubiquitin-associated domain-containing protein 1 (Ubac1) of Mus musculus (Mouse).